A 265-amino-acid polypeptide reads, in one-letter code: Apolipoprotein A-I (265 aa).

The N-terminal stretch at 1-18 (MKALVLTLAVLFFTGSQA) is a signal peptide. Tandem repeats lie at residues 67 to 88 (LKLL…EQLG) and 89 to 110 (PVTQ…QEMN). A 10 X approximate tandem repeats region spans residues 67–265 (LKLLDNWDSL…DEASKKLNAQ (199 aa)). Position 109 is a methionine sulfoxide (methionine 109). The stretch at 111-121 (KDLEEVKQKVQ) is one 3; half-length repeat. 5 repeat units span residues 122 to 142 (PYLD…RQKV), 144 to 165 (PLGE…DKLT), 166 to 187 (PLAE…QQLA), 188 to 209 (PYSD…EGGG), and 210 to 230 (SLAE…EKAK). The stretch at 231–241 (PALEDLRQGLL) is one 9; half-length repeat. Repeat unit 10 spans residues 242–265 (PVLESLKVSILAAIDEASKKLNAQ).

Belongs to the apolipoprotein A1/A4/E family. As to quaternary structure, homodimer. Interacts with APOA1BP and CLU. Component of a sperm activating protein complex (SPAP), consisting of APOA1, an immunoglobulin heavy chain, an immunoglobulin light chain and albumin. Interacts with NDRG1. Interacts with SCGB3A2. Interacts with NAXE and YJEFN3. Glycosylated. Post-translationally, palmitoylated. In terms of processing, phosphorylation sites are present in the extracellular medium. As to expression, major protein of plasma HDL, also found in chylomicrons.

The protein resides in the secreted. Functionally, participates in the reverse transport of cholesterol from tissues to the liver for excretion by promoting cholesterol efflux from tissues and by acting as a cofactor for the lecithin cholesterol acyltransferase (LCAT). As part of the SPAP complex, activates spermatozoa motility. The polypeptide is Apolipoprotein A-I (APOA1) (Physeter macrocephalus (Sperm whale)).